Reading from the N-terminus, the 146-residue chain is Phosphoribosyl-AMP cyclohydrolase (146 aa).

D95 contributes to the Mg(2+) binding site. C96 serves as a coordination point for Zn(2+). Residues D97 and D99 each contribute to the Mg(2+) site. Residues C112 and C119 each contribute to the Zn(2+) site.

The protein belongs to the PRA-CH family. In terms of assembly, homodimer. It depends on Mg(2+) as a cofactor. Zn(2+) is required as a cofactor.

The protein resides in the cytoplasm. It carries out the reaction 1-(5-phospho-beta-D-ribosyl)-5'-AMP + H2O = 1-(5-phospho-beta-D-ribosyl)-5-[(5-phospho-beta-D-ribosylamino)methylideneamino]imidazole-4-carboxamide. It participates in amino-acid biosynthesis; L-histidine biosynthesis; L-histidine from 5-phospho-alpha-D-ribose 1-diphosphate: step 3/9. Its function is as follows. Catalyzes the hydrolysis of the adenine ring of phosphoribosyl-AMP. This is Phosphoribosyl-AMP cyclohydrolase from Chromohalobacter salexigens (strain ATCC BAA-138 / DSM 3043 / CIP 106854 / NCIMB 13768 / 1H11).